We begin with the raw amino-acid sequence, 1511 residues long: DNA-directed RNA polymerase subunit beta' (1511 aa).

Residues cysteine 75, cysteine 77, cysteine 90, and cysteine 93 each coordinate Zn(2+). Residues aspartate 474, aspartate 476, and aspartate 478 each contribute to the Mg(2+) site. Positions 804, 878, 885, and 888 each coordinate Zn(2+).

It belongs to the RNA polymerase beta' chain family. As to quaternary structure, the RNAP catalytic core consists of 2 alpha, 1 beta, 1 beta' and 1 omega subunit. When a sigma factor is associated with the core the holoenzyme is formed, which can initiate transcription. It depends on Mg(2+) as a cofactor. Zn(2+) serves as cofactor.

It carries out the reaction RNA(n) + a ribonucleoside 5'-triphosphate = RNA(n+1) + diphosphate. In terms of biological role, DNA-dependent RNA polymerase catalyzes the transcription of DNA into RNA using the four ribonucleoside triphosphates as substrates. The sequence is that of DNA-directed RNA polymerase subunit beta' from Aliarcobacter butzleri (strain RM4018) (Arcobacter butzleri).